The primary structure comprises 173 residues: Shikimate kinase 1 (173 aa).

14–19 (GAGKST) contacts ATP. Ser-18 serves as a coordination point for Mg(2+). Substrate contacts are provided by Asp-36, Arg-60, and Gly-82. Residue Arg-120 coordinates ATP. Position 140 (Arg-140) interacts with substrate. Gln-157 is a binding site for ATP.

The protein belongs to the shikimate kinase family. Monomer. Mg(2+) serves as cofactor.

Its subcellular location is the cytoplasm. The enzyme catalyses shikimate + ATP = 3-phosphoshikimate + ADP + H(+). It functions in the pathway metabolic intermediate biosynthesis; chorismate biosynthesis; chorismate from D-erythrose 4-phosphate and phosphoenolpyruvate: step 5/7. Functionally, catalyzes the specific phosphorylation of the 3-hydroxyl group of shikimic acid using ATP as a cosubstrate. The protein is Shikimate kinase 1 of Yersinia pseudotuberculosis serotype O:1b (strain IP 31758).